Here is a 612-residue protein sequence, read N- to C-terminus: Threonine--tRNA ligase (612 aa).

The tract at residues 218-509 is catalytic; sequence NHRKLGVELG…LSEHFGGNFP (292 aa). Positions 310, 361, and 486 each coordinate Zn(2+).

The protein belongs to the class-II aminoacyl-tRNA synthetase family. In terms of assembly, homodimer. Zn(2+) is required as a cofactor.

The protein resides in the cytoplasm. It carries out the reaction tRNA(Thr) + L-threonine + ATP = L-threonyl-tRNA(Thr) + AMP + diphosphate + H(+). Catalyzes the attachment of threonine to tRNA(Thr) in a two-step reaction: L-threonine is first activated by ATP to form Thr-AMP and then transferred to the acceptor end of tRNA(Thr). Also edits incorrectly charged L-seryl-tRNA(Thr). This Helicobacter pylori (strain Shi470) protein is Threonine--tRNA ligase.